The following is a 120-amino-acid chain: cAMP-responsive element-binding protein-like 2 (120 aa).

Residues Met1 to Ile24 form a disordered region. The segment covering Lys10 to Pro21 has biased composition (basic residues). Residues Lys23 to Ser86 form the bZIP domain. The interval Lys29–Arg60 is basic motif. A leucine-zipper region spans residues Ile62 to Leu69. The segment at Thr93–Trp120 is disordered.

The protein belongs to the bZIP family. ATF subfamily. In terms of assembly, interacts with CREB1; regulates CREB1 phosphorylation, stability and transcriptional activity. Interacts with immediate-early (IE) protein BICP22 of bovine herpesvirus-1 (BHV-1). Phosphorylated by AMPK.

Its subcellular location is the nucleus. Probable regulator of CREB1 transcriptional activity which is involved in adipose cells differentiation. May also play a regulatory role in the cell cycle. The chain is cAMP-responsive element-binding protein-like 2 (CREBL2) from Bos taurus (Bovine).